Here is a 93-residue protein sequence, read N- to C-terminus: Bublin coiled-coil protein (93 aa).

Disordered regions lie at residues 1-26 (MAGP…GDTF) and 74-93 (QQQS…QPPA). Residues 17–26 (DEGDEGGDTF) show a composition bias toward acidic residues. Residues 59-80 (LKELLESNRQTRLEFQQQSKQL) adopt a coiled-coil conformation.

Belongs to the UPF0184 (EST00098) family.

It is found in the cell junction. Its subcellular location is the cytoplasm. The protein resides in the cytoskeleton. Essential for intermediate filament organization in intestinal cells, interacts with intermediate filament and regulates intestinal lumen morphology. This Taeniopygia guttata (Zebra finch) protein is Bublin coiled-coil protein (BBLN).